We begin with the raw amino-acid sequence, 366 residues long: Inactive PGL/p-HBAD biosynthesis glycosyltransferase Mb2982c (366 aa).

2 disordered regions span residues Met-1–Ala-23 and Asp-295–Pro-366. Residues Asp-295 to Gly-311 are compositionally biased toward basic and acidic residues.

Belongs to the UDP-glycosyltransferase family.

The chain is Inactive PGL/p-HBAD biosynthesis glycosyltransferase Mb2982c from Mycobacterium bovis (strain ATCC BAA-935 / AF2122/97).